The sequence spans 167 residues: Phosphopantetheine adenylyltransferase (167 aa).

Thr9 provides a ligand contact to substrate. Residues 9-10 (TF) and His17 each bind ATP. Residues Lys41, Leu73, and Arg87 each contribute to the substrate site. ATP-binding positions include 88-90 (GLR), Glu98, and 123-129 (NSYISST).

The protein belongs to the bacterial CoaD family. As to quaternary structure, homohexamer. Mg(2+) serves as cofactor.

The protein localises to the cytoplasm. The catalysed reaction is (R)-4'-phosphopantetheine + ATP + H(+) = 3'-dephospho-CoA + diphosphate. The protein operates within cofactor biosynthesis; coenzyme A biosynthesis; CoA from (R)-pantothenate: step 4/5. Reversibly transfers an adenylyl group from ATP to 4'-phosphopantetheine, yielding dephospho-CoA (dPCoA) and pyrophosphate. The chain is Phosphopantetheine adenylyltransferase from Chromohalobacter salexigens (strain ATCC BAA-138 / DSM 3043 / CIP 106854 / NCIMB 13768 / 1H11).